A 518-amino-acid chain; its full sequence is MIPDVSQALAWLTEHPEALKGIRRGLERETLRVTPEGELATTGHPESLGAALTHKWITTDFAEALLEFITPVDGDIDHMLTVMRDIHRHTARALGDERMWPLSMPCYIKEGQDIELAQYGTSNIGRFKTLYRSGLKNRYGALMQTISGVHYNFSLPLAFWQAKCQVDDAESGKEAISAGYFRLIRNYYRFGWVIPYLFGASPAICSSFLQGKPTKLPFEKTDCGMYYLPYATSLRLSDLGYTNKSQSNLGITFNDLHGYVAGLKRAIKTPSEEYAKLGLKKDGEYLQINTNILQIENELYAPIRPKRVTRDGESPSDALLRGGIEYIEVRSLDINPFSPIGVDENQVRFLDLFMVWCALADAPEMSSDELLCTRTNWNRVILEGRKPGLTLGIGCETAQFPLEKVGKDLFRDLRRVAQTLDGIHGGQEYQQVCDRLVACFDDPELTYSAQILRSMIENGIGGTGRMLADRYRTMLREEPLQALHEEDFRQEQAASLARQREIEAADTEPFDEWLAKQA.

Belongs to the glutamate--cysteine ligase type 1 family. Type 1 subfamily.

The catalysed reaction is L-cysteine + L-glutamate + ATP = gamma-L-glutamyl-L-cysteine + ADP + phosphate + H(+). It participates in sulfur metabolism; glutathione biosynthesis; glutathione from L-cysteine and L-glutamate: step 1/2. The sequence is that of Glutamate--cysteine ligase from Cronobacter sakazakii (strain ATCC BAA-894) (Enterobacter sakazakii).